A 180-amino-acid polypeptide reads, in one-letter code: Ribosome maturation factor RimM (180 aa).

Positions 108-180 (PDEYYWVDLE…LIVVDWDPDF (73 aa)) constitute a PRC barrel domain.

It belongs to the RimM family. As to quaternary structure, binds ribosomal protein uS19.

The protein localises to the cytoplasm. An accessory protein needed during the final step in the assembly of 30S ribosomal subunit, possibly for assembly of the head region. Essential for efficient processing of 16S rRNA. May be needed both before and after RbfA during the maturation of 16S rRNA. It has affinity for free ribosomal 30S subunits but not for 70S ribosomes. The sequence is that of Ribosome maturation factor RimM from Xanthomonas euvesicatoria pv. vesicatoria (strain 85-10) (Xanthomonas campestris pv. vesicatoria).